The chain runs to 877 residues: DNA mismatch repair protein MutS (877 aa).

630 to 637 (GPNMAGKS) lines the ATP pocket.

This sequence belongs to the DNA mismatch repair MutS family.

Functionally, this protein is involved in the repair of mismatches in DNA. It is possible that it carries out the mismatch recognition step. This protein has a weak ATPase activity. This Ruegeria pomeroyi (strain ATCC 700808 / DSM 15171 / DSS-3) (Silicibacter pomeroyi) protein is DNA mismatch repair protein MutS.